Consider the following 423-residue polypeptide: Gamma-glutamyl phosphate reductase (423 aa).

Belongs to the gamma-glutamyl phosphate reductase family.

It localises to the cytoplasm. It carries out the reaction L-glutamate 5-semialdehyde + phosphate + NADP(+) = L-glutamyl 5-phosphate + NADPH + H(+). The protein operates within amino-acid biosynthesis; L-proline biosynthesis; L-glutamate 5-semialdehyde from L-glutamate: step 2/2. Its function is as follows. Catalyzes the NADPH-dependent reduction of L-glutamate 5-phosphate into L-glutamate 5-semialdehyde and phosphate. The product spontaneously undergoes cyclization to form 1-pyrroline-5-carboxylate. This Paramagnetospirillum magneticum (strain ATCC 700264 / AMB-1) (Magnetospirillum magneticum) protein is Gamma-glutamyl phosphate reductase.